The sequence spans 149 residues: D-aminoacyl-tRNA deacylase (149 aa).

Residues 137-138 carry the Gly-cisPro motif, important for rejection of L-amino acids motif; that stretch reads GP.

The protein belongs to the DTD family. In terms of assembly, homodimer.

Its subcellular location is the cytoplasm. The catalysed reaction is glycyl-tRNA(Ala) + H2O = tRNA(Ala) + glycine + H(+). The enzyme catalyses a D-aminoacyl-tRNA + H2O = a tRNA + a D-alpha-amino acid + H(+). Functionally, an aminoacyl-tRNA editing enzyme that deacylates mischarged D-aminoacyl-tRNAs. Also deacylates mischarged glycyl-tRNA(Ala), protecting cells against glycine mischarging by AlaRS. Acts via tRNA-based rather than protein-based catalysis; rejects L-amino acids rather than detecting D-amino acids in the active site. By recycling D-aminoacyl-tRNA to D-amino acids and free tRNA molecules, this enzyme counteracts the toxicity associated with the formation of D-aminoacyl-tRNA entities in vivo and helps enforce protein L-homochirality. This chain is D-aminoacyl-tRNA deacylase, found in Desulforudis audaxviator (strain MP104C).